Consider the following 448-residue polypeptide: Methionine aminopeptidase 2-1 (448 aa).

A disordered region spans residues 1–83 (MAAQVIPELQ…TQKAQTEPPR (83 aa)). The segment covering 32 to 48 (ENEDGDSEDDNGDDQGA) has biased composition (acidic residues). Positions 59 to 73 (AKKKKKKKPKKKKKD) are enriched in basic residues. His198 provides a ligand contact to substrate. Positions 218, 229, and 298 each coordinate a divalent metal cation. His306 contributes to the substrate binding site. Residues Glu334 and Glu429 each coordinate a divalent metal cation.

The protein belongs to the peptidase M24A family. Methionine aminopeptidase eukaryotic type 2 subfamily. It depends on Co(2+) as a cofactor. Requires Zn(2+) as cofactor. Mn(2+) is required as a cofactor. The cofactor is Fe(2+).

The protein localises to the cytoplasm. The catalysed reaction is Release of N-terminal amino acids, preferentially methionine, from peptides and arylamides.. Functionally, cotranslationally removes the N-terminal methionine from nascent proteins. The N-terminal methionine is often cleaved when the second residue in the primary sequence is small and uncharged (Met-Ala-, Cys, Gly, Pro, Ser, Thr, or Val). This chain is Methionine aminopeptidase 2-1, found in Ajellomyces capsulatus (strain G186AR / H82 / ATCC MYA-2454 / RMSCC 2432) (Darling's disease fungus).